Reading from the N-terminus, the 473-residue chain is UTP--glucose-1-phosphate uridylyltransferase (473 aa).

Residues 89–92, Lys103, Gln166, and Gly195 contribute to the UTP site; that span reads LNGG. 91-92 is a substrate binding site; the sequence is GG. Residues His196 and 224–226 each bind substrate; that span reads NSD. UTP is bound by residues Asp226 and Lys364.

Belongs to the UDPGP type 1 family.

The protein localises to the cytoplasm. It carries out the reaction alpha-D-glucose 1-phosphate + UTP + H(+) = UDP-alpha-D-glucose + diphosphate. Its function is as follows. Plays a central role as a glucosyl donor in cellular metabolic pathways. This is UTP--glucose-1-phosphate uridylyltransferase from Hordeum vulgare (Barley).